A 274-amino-acid chain; its full sequence is Large ribosomal subunit protein uL2 (274 aa).

2 disordered regions span residues 30–54 and 223–274; these read EKSL…IRHK and VAMN…QLKG. Low complexity predominate over residues 36–48; that stretch reads GKKSSGGRNNNGR. Positions 263–274 are enriched in basic and acidic residues; it reads KFSDKYIKQLKG.

Belongs to the universal ribosomal protein uL2 family. Part of the 50S ribosomal subunit. Forms a bridge to the 30S subunit in the 70S ribosome.

Its function is as follows. One of the primary rRNA binding proteins. Required for association of the 30S and 50S subunits to form the 70S ribosome, for tRNA binding and peptide bond formation. It has been suggested to have peptidyltransferase activity; this is somewhat controversial. Makes several contacts with the 16S rRNA in the 70S ribosome. This chain is Large ribosomal subunit protein uL2, found in Wolbachia sp. subsp. Brugia malayi (strain TRS).